Here is a 393-residue protein sequence, read N- to C-terminus: NAD(P)H-quinone oxidoreductase subunit H, chloroplastic (393 aa).

The protein belongs to the complex I 49 kDa subunit family. As to quaternary structure, NDH is composed of at least 16 different subunits, 5 of which are encoded in the nucleus.

It is found in the plastid. The protein localises to the chloroplast thylakoid membrane. It catalyses the reaction a plastoquinone + NADH + (n+1) H(+)(in) = a plastoquinol + NAD(+) + n H(+)(out). The catalysed reaction is a plastoquinone + NADPH + (n+1) H(+)(in) = a plastoquinol + NADP(+) + n H(+)(out). Its function is as follows. NDH shuttles electrons from NAD(P)H:plastoquinone, via FMN and iron-sulfur (Fe-S) centers, to quinones in the photosynthetic chain and possibly in a chloroplast respiratory chain. The immediate electron acceptor for the enzyme in this species is believed to be plastoquinone. Couples the redox reaction to proton translocation, and thus conserves the redox energy in a proton gradient. The polypeptide is NAD(P)H-quinone oxidoreductase subunit H, chloroplastic (Zygnema circumcarinatum (Green alga)).